We begin with the raw amino-acid sequence, 150 residues long: 3-dehydroquinate dehydratase (150 aa).

Residue Tyr22 is the Proton acceptor of the active site. The substrate site is built by Asn73, His79, and Asp86. His99 serves as the catalytic Proton donor. Substrate is bound by residues 100-101 (LS) and Arg110.

This sequence belongs to the type-II 3-dehydroquinase family. As to quaternary structure, homododecamer.

The enzyme catalyses 3-dehydroquinate = 3-dehydroshikimate + H2O. It participates in metabolic intermediate biosynthesis; chorismate biosynthesis; chorismate from D-erythrose 4-phosphate and phosphoenolpyruvate: step 3/7. In terms of biological role, catalyzes a trans-dehydration via an enolate intermediate. This is 3-dehydroquinate dehydratase from Dinoroseobacter shibae (strain DSM 16493 / NCIMB 14021 / DFL 12).